A 1941-amino-acid chain; its full sequence is Myosin-7B (1941 aa).

One can recognise a Myosin N-terminal SH3-like domain in the interval 30–80 (DGKKRVWVPDEQDAYVEAEVKTEATGGKVTVETKDQKVLTVRETEMQPMNP). A Myosin motor domain is found at 84–785 (DLLEDMAMMT…LLGILEELRD (702 aa)). 177–184 (GESGAGKT) contacts ATP. Actin-binding regions lie at residues 662 to 684 (LNKL…VPNE) and 764 to 778 (QFGH…GLLG). One can recognise an IQ domain in the interval 788–817 (LAKVLTLLQARSRGRLMRLEYQRMLGGRDA). Residues 846–1935 (LLRSAQAEEE…KLRARSRDAL (1090 aa)) adopt a coiled-coil conformation. Residues 1887–1941 (RQFEEAEQQASTNLAKYRKAQHELDDAEERADMAETQANKLRARSRDALGPKHKE) are disordered. A compositionally biased stretch (basic and acidic residues) spans 1930–1941 (RSRDALGPKHKE).

The protein belongs to the TRAFAC class myosin-kinesin ATPase superfamily. Myosin family. In terms of assembly, muscle myosin is a hexameric protein that consists of 2 heavy chain subunits (MHC), 2 alkali light chain subunits (MLC) and 2 regulatory light chain subunits (MLC-2).

It localises to the membrane. In terms of biological role, involved in muscle contraction. The sequence is that of Myosin-7B (Myh7b) from Mus musculus (Mouse).